The chain runs to 407 residues: Formate-dependent phosphoribosylglycinamide formyltransferase (407 aa).

Residues 28–29 and Glu88 contribute to the N(1)-(5-phospho-beta-D-ribosyl)glycinamide site; that span reads EL. Residues Arg121, Lys162, 167 to 172, 202 to 205, and Glu210 each bind ATP; these read SSGKGQ and EGFI. Residues 126–320 enclose the ATP-grasp domain; the sequence is RLAAEELGVA…EFELHAKAIL (195 aa). Mg(2+) is bound by residues Glu279 and Glu291. N(1)-(5-phospho-beta-D-ribosyl)glycinamide contacts are provided by residues Asp298, Lys367, and 374–375; that span reads RR.

It belongs to the PurK/PurT family. In terms of assembly, homodimer.

The catalysed reaction is N(1)-(5-phospho-beta-D-ribosyl)glycinamide + formate + ATP = N(2)-formyl-N(1)-(5-phospho-beta-D-ribosyl)glycinamide + ADP + phosphate + H(+). It functions in the pathway purine metabolism; IMP biosynthesis via de novo pathway; N(2)-formyl-N(1)-(5-phospho-D-ribosyl)glycinamide from N(1)-(5-phospho-D-ribosyl)glycinamide (formate route): step 1/1. Involved in the de novo purine biosynthesis. Catalyzes the transfer of formate to 5-phospho-ribosyl-glycinamide (GAR), producing 5-phospho-ribosyl-N-formylglycinamide (FGAR). Formate is provided by PurU via hydrolysis of 10-formyl-tetrahydrofolate. This Herminiimonas arsenicoxydans protein is Formate-dependent phosphoribosylglycinamide formyltransferase.